Consider the following 633-residue polypeptide: 1-deoxy-D-xylulose-5-phosphate synthase (633 aa).

Residues histidine 72 and 113-115 (GHS) each bind thiamine diphosphate. Aspartate 144 serves as a coordination point for Mg(2+). Thiamine diphosphate-binding positions include 145–146 (GA), asparagine 173, tyrosine 284, and glutamate 367. Asparagine 173 is a Mg(2+) binding site.

This sequence belongs to the transketolase family. DXPS subfamily. As to quaternary structure, homodimer. Mg(2+) is required as a cofactor. The cofactor is thiamine diphosphate.

The catalysed reaction is D-glyceraldehyde 3-phosphate + pyruvate + H(+) = 1-deoxy-D-xylulose 5-phosphate + CO2. It functions in the pathway metabolic intermediate biosynthesis; 1-deoxy-D-xylulose 5-phosphate biosynthesis; 1-deoxy-D-xylulose 5-phosphate from D-glyceraldehyde 3-phosphate and pyruvate: step 1/1. Functionally, catalyzes the acyloin condensation reaction between C atoms 2 and 3 of pyruvate and glyceraldehyde 3-phosphate to yield 1-deoxy-D-xylulose-5-phosphate (DXP). The chain is 1-deoxy-D-xylulose-5-phosphate synthase from Lysinibacillus sphaericus (strain C3-41).